A 225-amino-acid polypeptide reads, in one-letter code: Putative ankyrin repeat protein RBE_1025 (225 aa).

4 ANK repeats span residues L6 to P35, N41 to I71, T75 to I120, and K124 to I153.

The chain is Putative ankyrin repeat protein RBE_1025 from Rickettsia bellii (strain RML369-C).